The chain runs to 174 residues: RNA pyrophosphohydrolase (174 aa).

Positions 6–145 (GYRPNVGMII…KRRVYWQALQ (140 aa)) constitute a Nudix hydrolase domain. The Nudix box motif lies at 38–59 (GGIDYAETPEQAMFRELEEEVG).

This sequence belongs to the Nudix hydrolase family. RppH subfamily. A divalent metal cation is required as a cofactor.

In terms of biological role, accelerates the degradation of transcripts by removing pyrophosphate from the 5'-end of triphosphorylated RNA, leading to a more labile monophosphorylated state that can stimulate subsequent ribonuclease cleavage. The sequence is that of RNA pyrophosphohydrolase from Acidithiobacillus ferrooxidans (strain ATCC 53993 / BNL-5-31) (Leptospirillum ferrooxidans (ATCC 53993)).